Reading from the N-terminus, the 88-residue chain is Small ribosomal subunit protein bS20 (88 aa).

A disordered region spans residues M1–R20.

Belongs to the bacterial ribosomal protein bS20 family.

Binds directly to 16S ribosomal RNA. The sequence is that of Small ribosomal subunit protein bS20 from Campylobacter fetus subsp. fetus (strain 82-40).